The following is a 334-amino-acid chain: MFNKKNILITGGTGSFGKTYTKVLLENYKPNKIIIYSRDELKQFEMASVFNAPCMRYFIGDVRDKERLSAAMRDVDFVIHAAAMKHVPIAEYNPMECIKTNIHGAQNVIDACFENGVKKCIALSTDKACNPVNLYGATKLASDKLFVAANNIAGNKQTRFGVTRYGNVVGSRGSVVPFFKKLISEGAKELPITDTRMTRFWISLEDGVKFVLSNFERMHGGEIFIPKIPSMKITDLAHALAPNLSHKIIGIRAGEKLHEIMISSDDSHLTYEFENYYAISPSIKFVDKDNDFSINALGEKGQKVKDGFSYSSDNNPLWASEKELLEIINHTEGF.

NADP(+) contacts are provided by residues 13–16 (TGSF), 37–42 (SRDELK), 61–62 (DV), Ala-81, Lys-85, and 123–124 (LS). Lys-85 provides a ligand contact to substrate. Residue Lys-127 is part of the active site. Residues Tyr-135 and Lys-139 each contribute to the NADP(+) site. Substrate is bound at residue Asn-167. Position 168–172 (168–172 (VVGSR)) interacts with NADP(+). Positions 175, 193, 252, and 255 each coordinate substrate.

The protein belongs to the polysaccharide synthase family. In terms of assembly, homohexamer. It depends on NADP(+) as a cofactor.

The enzyme catalyses UDP-N-acetyl-alpha-D-glucosamine = UDP-2-acetamido-2,6-dideoxy-beta-L-arabino-hex-4-ulose + H2O. Its function is as follows. Catalyzes the first step in the biosynthesis of pseudaminic acid, a sialic-acid-like sugar that is used to modify flagellin. Has both C6 dehydratase and C5 epimerase activities that result in the production of both UDP-2-acetamido-2,6-dideoxy-beta-L-arabino-4-hexulose and UDP-2-acetamido-2,6-dideoxy-alpha-D-xylo-4-hexulose. The sequence is that of UDP-N-acetylglucosamine 4,6-dehydratase (inverting) (pseB) from Campylobacter jejuni subsp. jejuni serotype O:2 (strain ATCC 700819 / NCTC 11168).